The following is a 100-amino-acid chain: Large ribosomal subunit protein uL23 (100 aa).

It belongs to the universal ribosomal protein uL23 family. In terms of assembly, part of the 50S ribosomal subunit. Contacts protein L29, and trigger factor when it is bound to the ribosome.

In terms of biological role, one of the early assembly proteins it binds 23S rRNA. One of the proteins that surrounds the polypeptide exit tunnel on the outside of the ribosome. Forms the main docking site for trigger factor binding to the ribosome. The polypeptide is Large ribosomal subunit protein uL23 (Shewanella denitrificans (strain OS217 / ATCC BAA-1090 / DSM 15013)).